Here is a 360-residue protein sequence, read N- to C-terminus: Lipid-A-disaccharide synthase (360 aa).

This sequence belongs to the LpxB family.

The enzyme catalyses a lipid X + a UDP-2-N,3-O-bis[(3R)-3-hydroxyacyl]-alpha-D-glucosamine = a lipid A disaccharide + UDP + H(+). It functions in the pathway bacterial outer membrane biogenesis; LPS lipid A biosynthesis. Its function is as follows. Condensation of UDP-2,3-diacylglucosamine and 2,3-diacylglucosamine-1-phosphate to form lipid A disaccharide, a precursor of lipid A, a phosphorylated glycolipid that anchors the lipopolysaccharide to the outer membrane of the cell. This chain is Lipid-A-disaccharide synthase, found in Helicobacter pylori (strain Shi470).